Reading from the N-terminus, the 1031-residue chain is Toll-like receptor 9 (1031 aa).

The signal sequence occupies residues 1 to 25; sequence MGPCHGALQPLSLLVQAAMLAVALA. Residues 26-817 are Extracellular-facing; the sequence is QGTLPPFLPC…LCLDESLSWD (792 aa). Cysteine 35 and cysteine 45 form a disulfide bridge. Position 47-51 (47-51) interacts with DNA; that stretch reads WLFLK. LRR repeat units lie at residues 62–85, 87–110, 122–147, 150–166, 167–190, 198–221, 223–242, 243–268, 283–306, 308–332, 333–356, 363–386, 390–413, 414–438, 470–494, 496–519, 520–543, 545–567, 574–598, 600–622, 627–650, 652–675, 676–699, 701–723, 724–747, and 749–772; these read RDNV…DFAQ, SNLQ…HFPC, VPTL…SLVS, LSRT…LTGL, HALR…ALEV, LGNL…LPPS, EYLL…DLAN, LTAL…CVEC, LSRL…WFRG, GNLT…AFQG, LAQL…HLTL, LLSL…TLQP, LPML…IFKD, FPGL…ATTG, CKNL…MFAQ, SRLQ…QFVP, LTSL…SFTE, PRLE…VGHN, LPTL…LCST, LWAL…LYLR, LRSL…TLGN, PKSL…SLTL, LPNL…SLPS, TQLQ…FFAL, ATRL…WFGF, and AGSL…AFVD. Asparagine 64 carries an N-linked (GlcNAc...) asparagine glycan. DNA is bound by residues 72-77 and 95-109; these read SNRIHH and KWNC…MHFP. Cysteines 98 and 110 form a disulfide. Asparagine 129 carries N-linked (GlcNAc...) asparagine glycosylation. DNA-binding positions include tyrosine 132, arginine 152, and 179–181; that span reads YYK. Cysteine 178 and cysteine 184 are oxidised to a cystine. Asparagine 200 is a glycosylation site (N-linked (GlcNAc...) asparagine). Tyrosine 208 serves as a coordination point for DNA. N-linked (GlcNAc...) asparagine glycans are attached at residues asparagine 210 and asparagine 242. 2 cysteine pairs are disulfide-bonded: cysteine 255–cysteine 268 and cysteine 258–cysteine 265. Cysteine 258 is lipidated: S-palmitoyl cysteine. A DNA-binding site is contributed by arginine 262. Cysteine 265 carries S-palmitoyl cysteine lipidation. Residues asparagine 309 and asparagine 340 are each glycosylated (N-linked (GlcNAc...) asparagine). Residues cysteine 470 and cysteine 500 are joined by a disulfide bond. Residues asparagine 472 and asparagine 513 are each glycosylated (N-linked (GlcNAc...) asparagine). N-linked (GlcNAc...) asparagine glycosylation occurs at asparagine 567. Asparagine 669 and asparagine 694 each carry an N-linked (GlcNAc...) asparagine glycan. Residue asparagine 731 is glycosylated (N-linked (GlcNAc...) asparagine). 2 disulfides stabilise this stretch: cysteine 764/cysteine 790 and cysteine 766/cysteine 809. Residues 818–838 form a helical membrane-spanning segment; sequence CFGLSLLVVALGLAMPMLHHL. Residues 839 to 1031 lie on the Cytoplasmic side of the membrane; sequence CGWDLWYCFH…NFCRGPTMAE (193 aa). A TIR domain is found at 866-1011; sequence LSYDAFVVFD…SFWAQLGMAL (146 aa).

Belongs to the Toll-like receptor family. In terms of assembly, monomer and homodimer. Exists as a monomer in the absence of unmethylated cytidine-phosphate-guanosine (CpG) ligand. Proteolytic processing of an insertion loop (Z-loop) is required for homodimerization upon binding to the unmethylated CpG ligand leading to its activation. Interacts with MYD88 via their respective TIR domains. Interacts with BTK. Interacts (via transmembrane domain) with UNC93B1. Interacts with CD300LH; the interaction may promote full activation of TLR9-triggered innate responses. Interacts with CNPY3 and HSP90B1; this interaction is required for proper folding in the endoplasmic reticulum. Interacts with SMPDL3B. Interacts with CD82; this interaction is essential for TLR9-dependent myddosome formation in response to CpG stimulation. Activated by proteolytic cleavage of the flexible loop between repeats LRR14 and LRR15 within the ectodomain. Cleavage requires UNC93B1. Proteolytically processed by first removing the majority of the ectodomain by either asparagine endopeptidase (AEP) or a cathepsin followed by a trimming event that is solely cathepsin mediated and required for optimal receptor signaling. Post-translationally, palmitoylated by ZDHHC3 in the Golgi regulates TLR9 trafficking from the Golgi to endosomes. Depalmitoylation by PPT1 controls the release of TLR9 from UNC93B1 in endosomes. As to expression, expressed in airway epithelium, vascular endothelium and inflammatory cells in blood vessels of the lungs (at protein level). Highly expressed in pulmonary intravascular macrophages (PIMs) and to a lesser extent in alveolar macrophages, neutrophiles, type-II alveolar epithelial cells and bronchial epithelial cells of the lungs (at protein level). High constitutive intracellular expression in leukocytes including polymorphonuclear leukocytes (PMNs), CD4 and CD8 T cells (at protein level). Expressed throughout the respiratory tract including larynx, upper, middle and lower trachea, and bronchus in isolated equine respiratory epithelial cells (ERECs) and in fully differentiated ERECs cultured at the air-fluid interface (AFI) (at protein level). Constitutively expressed in peripheral blood mononuclear cells (PBMCs), lymph nodes and spleen. The level of expression in PBMCs is about 2- to 3-fold higher than that in lymph nodes and spleen. Very low expression in liver, heart, lung, kidney, small intestine, colon and stomach. Low expression in the airway tissue epithelium of the larynx, upper trachea, middle tranchea, lower trachea, bronchus and spleen, and more abundant expression in mesenteric lymph node. Not expressed in fully differentiated bronchus epithelial cells cultured at the AFI for four weeks. Expressed in gingival tissue.

Its subcellular location is the endoplasmic reticulum membrane. The protein localises to the endosome. The protein resides in the lysosome. It localises to the cytoplasmic vesicle. It is found in the phagosome. Its subcellular location is the cell membrane. The protein localises to the cytoplasm. The protein resides in the nucleus. In terms of biological role, key component of innate and adaptive immunity. TLRs (Toll-like receptors) control host immune response against pathogens through recognition of molecular patterns specific to microorganisms. TLR9 is a nucleotide-sensing TLR which is activated by unmethylated cytidine-phosphate-guanosine (CpG) dinucleotides. Acts via MYD88 and TRAF6, leading to NF-kappa-B activation, cytokine secretion and the inflammatory response. Upon CpG stimulation, induces B-cell proliferation, activation, survival and antibody production. The polypeptide is Toll-like receptor 9 (Equus caballus (Horse)).